The sequence spans 175 residues: MLFNFLQKNLCKAFTFNMTSGHCQQTLATLFRSTLLLSGDNTKLFTPIRPQSWTCVLNYFIYLLCSQVTPETMFKDIVSFLQANGASSACWVLPLNFTETRAPKQQVSRLPSKWKILTADGSPQPWQVYWGIPSCLAYASYVGHLAEIATDWGKVTETNTQELLNHIFDLLRIFF.

This is an uncharacterized protein from Connochaetes taurinus (Blue wildebeest).